The sequence spans 677 residues: Potassium channel KAT1 (677 aa).

Topologically, residues 1 to 63 (MSISWTRNFF…PFNPRYRAWE (63 aa)) are cytoplasmic. The chain crosses the membrane as a helical span at residues 64 to 84 (MWLVLLVIYSAWICPFQFAFI). Topologically, residues 85–90 (TYKKDA) are extracellular. The helical transmembrane segment at 91 to 111 (IFIIDNIVNGFFAIDIILTFF) threads the bilayer. Topologically, residues 112–134 (VAYLDSHSYLLVDSPKKIAIRYL) are cytoplasmic. The helical transmembrane segment at 135 to 155 (STWFAFDVCSTAPFQPLSLLF) threads the bilayer. Over 156-165 (NYNGSELGFR) the chain is Extracellular. The helical; Voltage-sensor transmembrane segment at 166–186 (ILSMLRLWRLRRVSSLFARLE) threads the bilayer. The Cytoplasmic portion of the chain corresponds to 187–200 (KDIRFNYFWIRCTK). A helical transmembrane segment spans residues 201-221 (LISVTLFAIHCAGCFNYLIAD). At 222 to 248 (RYPNPRKTWIGAVYPNFKEASLWNRYV) the chain is on the extracellular side. An intramembrane region (pore-forming) is located at residues 249–268 (TALYWSITTLTTTGYGDFHA). The Extracellular segment spans residues 269–272 (ENPR). A helical membrane pass occupies residues 273–293 (EMLFDIFFMMFNLGLTAYLIG). Residues 294–677 (NMTNLVVHWT…DGDHLYFSSN (384 aa)) are Cytoplasmic-facing. 377-496 (LFQGVSRNFL…RVIMNNLFMK (120 aa)) provides a ligand contact to a nucleoside 3',5'-cyclic phosphate. Basic and acidic residues predominate over residues 568–577 (IERAKVERSS). A disordered region spans residues 568–601 (IERAKVERSSSETAGRSYANDSSKKDPYCSSSNQ). The 66-residue stretch at 612 to 677 (RVTIHMMSES…DGDHLYFSSN (66 aa)) folds into the KHA domain.

It belongs to the potassium channel family. Plant (TC 1.A.1.4) subfamily. The potassium channel is probably composed of a homo- or heterotetrameric complex of pore-forming subunits. May interact with AKT2 and KAT2. Interacts with SLAC1 and SLAH3. Expressed in guard cells, and in roots.

The protein localises to the membrane. Highly selective inward-rectifying potassium channel. This voltage-gated channel could mediate long-term potassium influx into guard cells leading to stomatal opening. Assuming opened or closed conformations in response to the voltage difference across the membrane, the channel is activated by hyperpolarization. The channel activity is enhanced upon external acidification. Also permeable to ammonium ions. Blocked by tetraethylammonium and barium ions. The polypeptide is Potassium channel KAT1 (KAT1) (Arabidopsis thaliana (Mouse-ear cress)).